A 503-amino-acid chain; its full sequence is Protein ERGIC-53-like (503 aa).

Positions 1-25 (MLKTGGLSPSLCLLSLLLALHSAER) are cleaved as a signal peptide. Over 26 to 439 (SYPPPQRRFE…WLPGFSTCLR (414 aa)) the chain is Lumenal. Residues 32–253 (RRFEYKLSFK…DVLSFLTFSL (222 aa)) form the L-type lectin-like domain. Residues cysteine 177 and cysteine 216 are joined by a disulfide bond. The helical transmembrane segment at 440–460 (TSIFLFFLLIQTVGFFCYMNF) threads the bilayer. Residues 461–503 (RQELDKRLQEYLFTESISLQPALPIPRTIGVLRRQPVSPSMQA) are Cytoplasmic-facing.

In terms of tissue distribution, predominantly expressed in the sublingual salivary gland, in the mucous cells of the acini, but not in the serous cells, nor in the duct system (at protein level). Not detected in the submandilar, nor the parotid glands. Expressed in the mucous glands, but not detected in the serous glands (at protein level). Besides the salivary glands, expressed in the Brunner's glands in the duodenum, but no other mucous or serous glands (at protein level).

It is found in the endoplasmic reticulum-Golgi intermediate compartment membrane. The protein is Protein ERGIC-53-like (Lman1l) of Rattus norvegicus (Rat).